We begin with the raw amino-acid sequence, 383 residues long: Arginine biosynthesis bifunctional protein ArgJ (383 aa).

Substrate is bound by residues Thr146, Lys168, Thr179, Glu259, Asn378, and Ser383. Catalysis depends on Thr179, which acts as the Nucleophile.

The protein belongs to the ArgJ family. In terms of assembly, heterotetramer of two alpha and two beta chains.

The protein localises to the cytoplasm. It carries out the reaction N(2)-acetyl-L-ornithine + L-glutamate = N-acetyl-L-glutamate + L-ornithine. The enzyme catalyses L-glutamate + acetyl-CoA = N-acetyl-L-glutamate + CoA + H(+). It participates in amino-acid biosynthesis; L-arginine biosynthesis; L-ornithine and N-acetyl-L-glutamate from L-glutamate and N(2)-acetyl-L-ornithine (cyclic): step 1/1. The protein operates within amino-acid biosynthesis; L-arginine biosynthesis; N(2)-acetyl-L-ornithine from L-glutamate: step 1/4. Catalyzes two activities which are involved in the cyclic version of arginine biosynthesis: the synthesis of N-acetylglutamate from glutamate and acetyl-CoA as the acetyl donor, and of ornithine by transacetylation between N(2)-acetylornithine and glutamate. In Streptomyces avermitilis (strain ATCC 31267 / DSM 46492 / JCM 5070 / NBRC 14893 / NCIMB 12804 / NRRL 8165 / MA-4680), this protein is Arginine biosynthesis bifunctional protein ArgJ.